Consider the following 412-residue polypeptide: Multifunctional CCA protein (412 aa).

ATP contacts are provided by Gly-8 and Arg-11. Residues Gly-8 and Arg-11 each contribute to the CTP site. 2 residues coordinate Mg(2+): Asp-21 and Asp-23. ATP-binding residues include Arg-91, Arg-137, and Arg-140. Residues Arg-91, Arg-137, and Arg-140 each contribute to the CTP site. One can recognise an HD domain in the interval 228–329 (TGIHTMMVLE…VKLFDKADFW (102 aa)).

The protein belongs to the tRNA nucleotidyltransferase/poly(A) polymerase family. Bacterial CCA-adding enzyme type 1 subfamily. Monomer. Can also form homodimers and oligomers. Requires Mg(2+) as cofactor. Ni(2+) is required as a cofactor.

The enzyme catalyses a tRNA precursor + 2 CTP + ATP = a tRNA with a 3' CCA end + 3 diphosphate. It catalyses the reaction a tRNA with a 3' CCA end + 2 CTP + ATP = a tRNA with a 3' CCACCA end + 3 diphosphate. In terms of biological role, catalyzes the addition and repair of the essential 3'-terminal CCA sequence in tRNAs without using a nucleic acid template. Adds these three nucleotides in the order of C, C, and A to the tRNA nucleotide-73, using CTP and ATP as substrates and producing inorganic pyrophosphate. tRNA 3'-terminal CCA addition is required both for tRNA processing and repair. Also involved in tRNA surveillance by mediating tandem CCA addition to generate a CCACCA at the 3' terminus of unstable tRNAs. While stable tRNAs receive only 3'-terminal CCA, unstable tRNAs are marked with CCACCA and rapidly degraded. The chain is Multifunctional CCA protein from Shewanella pealeana (strain ATCC 700345 / ANG-SQ1).